Reading from the N-terminus, the 571-residue chain is METENQKTMEESTEKRKEEKKKRSRVKQVLADIAKQVDFWFGDANLHKDRFLREQIEKSRDGYVDISLLVSFNKMKKLTTDGKLIARALKSSSVVELDLEGTRIRRKKPLGERPKDEEERTVYVELLPKNVTHSWIERVFGKCGNVVYISIPHYKSTGDPKGFAFVEFETKEQAAKAIEFLNNPPEEAPRKPGIFPKTVKNKPIPSLRVAEEKKKKKKKKGRIKKEESVQAKELVVDSSSSGVSKATKRPRTASEGSEAETPEAPKQPAKKKKKRDKVETGGLPESKAGKRERSSAEDEDCLPPRPKLKKRAQKDGGGPAASEVSKEHRDLEFCSTEEEKEPGDRKGDSLSKGKRKHKKKHKERHKMGEEVIPLRVLSKTEWMDLKKEYLALQKASMASLKKTISQIKLESEMETESKAPPGSGQQCSTQEKVSAQGPQFVTGVIVKILSEDPLPGRKQVKDILATISEVVYIDLLEGDTECHARFKTPEDAQAVMNAQTEIKKKHSWNLEILSGDHEQRYWQKILVDRQAKLNQPREKKRGTEKLITKAEKIRLAKTQQASQHIRFSEYD.

N-acetylmethionine is present on M1. Positions 1-17 are enriched in basic and acidic residues; the sequence is METENQKTMEESTEKRK. Disordered regions lie at residues 1–25 and 181–366; these read METE…KRSR and LNNP…ERHK. In terms of domain architecture, HTH La-type RNA-binding spans 23 to 117; it reads RSRVKQVLAD…KPLGERPKDE (95 aa). An RRM domain is found at 120 to 198; that stretch reads RTVYVELLPK…PRKPGIFPKT (79 aa). The span at 214-223 shows a compositional bias: basic residues; sequence KKKKKKKGRI. K232 participates in a covalent cross-link: Glycyl lysine isopeptide (Lys-Gly) (interchain with G-Cter in SUMO2). The residue at position 252 (T252) is a Phosphothreonine. 2 positions are modified to phosphoserine: S254 and S257. Position 261 is a phosphothreonine (T261). The segment covering 287 to 296 has biased composition (basic and acidic residues); sequence KAGKRERSSA. A phosphoserine mark is found at S294, S295, and S335. T336 carries the post-translational modification Phosphothreonine. Residues 342–351 are compositionally biased toward basic and acidic residues; the sequence is PGDRKGDSLS. At S349 the chain carries Phosphoserine. The span at 352–365 shows a compositional bias: basic residues; the sequence is KGKRKHKKKHKERH. Residue K408 forms a Glycyl lysine isopeptide (Lys-Gly) (interchain with G-Cter in SUMO2) linkage. A disordered region spans residues 411–432; sequence SEMETESKAPPGSGQQCSTQEK. Over residues 423 to 432 the composition is skewed to polar residues; it reads SGQQCSTQEK. The xRRM domain maps to 439–552; it reads QFVTGVIVKI…TEKLITKAEK (114 aa).

This sequence belongs to the LARP7 family. In terms of assembly, core component of the 7SK RNP complex, at least composed of 7SK RNA, LARP7, MEPCE, HEXIM1 (or HEXIM2) and P-TEFb (composed of CDK9 and CCNT1/cyclin-T1). Interacts with METTL16. Interacts with RBM7; upon genotoxic stress this interaction is enhanced, triggering the release of inactive P-TEFb complex from the core, yielding to P-TEFb complex activation. Associates with box C/D small nucleolar ribonucleoprotein (snoRNP) complexes.

It localises to the nucleus. Its subcellular location is the nucleoplasm. RNA-binding protein that specifically binds distinct small nuclear RNA (snRNAs) and regulates their processing and function. Specifically binds the 7SK snRNA (7SK RNA) and acts as a core component of the 7SK ribonucleoprotein (RNP) complex, thereby acting as a negative regulator of transcription elongation by RNA polymerase II. The 7SK RNP complex sequesters the positive transcription elongation factor b (P-TEFb) in a large inactive 7SK RNP complex preventing RNA polymerase II phosphorylation and subsequent transcriptional elongation. The 7SK RNP complex also promotes snRNA gene transcription by RNA polymerase II via interaction with the little elongation complex (LEC). LARP7 specifically binds to the highly conserved 3'-terminal U-rich stretch of 7SK RNA; on stimulation, remains associated with 7SK RNA, whereas P-TEFb is released from the complex. LARP7 also acts as a regulator of mRNA splicing fidelity by promoting U6 snRNA processing. Specifically binds U6 snRNAs and associates with a subset of box C/D RNP complexes: promotes U6 snRNA 2'-O-methylation by facilitating U6 snRNA loading into box C/D RNP complexes. U6 snRNA 2'-O-methylation is required for mRNA splicing fidelity. Binds U6 snRNAs with a 5'-CAGGG-3' sequence motif. U6 snRNA processing is required for spermatogenesis. This chain is La-related protein 7, found in Rattus norvegicus (Rat).